Consider the following 379-residue polypeptide: 1-deoxy-D-xylulose 5-phosphate reductoisomerase (379 aa).

Threonine 10, glycine 11, serine 12, isoleucine 13, asparagine 39, and asparagine 121 together coordinate NADPH. A 1-deoxy-D-xylulose 5-phosphate-binding site is contributed by lysine 122. Glutamate 123 serves as a coordination point for NADPH. Aspartate 147 is a binding site for Mn(2+). The 1-deoxy-D-xylulose 5-phosphate site is built by serine 148, glutamate 149, serine 173, and histidine 196. Residue glutamate 149 participates in Mn(2+) binding. NADPH is bound at residue glycine 202. The 1-deoxy-D-xylulose 5-phosphate site is built by serine 209, asparagine 214, lysine 215, and glutamate 218. Residue glutamate 218 participates in Mn(2+) binding.

The protein belongs to the DXR family. It depends on Mg(2+) as a cofactor. Mn(2+) serves as cofactor.

It carries out the reaction 2-C-methyl-D-erythritol 4-phosphate + NADP(+) = 1-deoxy-D-xylulose 5-phosphate + NADPH + H(+). The protein operates within isoprenoid biosynthesis; isopentenyl diphosphate biosynthesis via DXP pathway; isopentenyl diphosphate from 1-deoxy-D-xylulose 5-phosphate: step 1/6. In terms of biological role, catalyzes the NADPH-dependent rearrangement and reduction of 1-deoxy-D-xylulose-5-phosphate (DXP) to 2-C-methyl-D-erythritol 4-phosphate (MEP). The chain is 1-deoxy-D-xylulose 5-phosphate reductoisomerase from Chlamydia pneumoniae (Chlamydophila pneumoniae).